The primary structure comprises 493 residues: Proline--tRNA ligase (493 aa).

Belongs to the class-II aminoacyl-tRNA synthetase family. ProS type 3 subfamily. Homodimer.

The protein localises to the cytoplasm. The catalysed reaction is tRNA(Pro) + L-proline + ATP = L-prolyl-tRNA(Pro) + AMP + diphosphate. Its function is as follows. Catalyzes the attachment of proline to tRNA(Pro) in a two-step reaction: proline is first activated by ATP to form Pro-AMP and then transferred to the acceptor end of tRNA(Pro). The chain is Proline--tRNA ligase from Porphyromonas gingivalis (strain ATCC 33277 / DSM 20709 / CIP 103683 / JCM 12257 / NCTC 11834 / 2561).